The sequence spans 148 residues: uncharacterized protein (148 aa).

The disordered stretch occupies residues 38–99; sequence QFRRHHHAEH…RRHLRKGHLK (62 aa). Residues 64-82 are compositionally biased toward basic and acidic residues; that stretch reads FHHDGGRHGHATRIHENNR. The span at 83–99 shows a compositional bias: basic residues; the sequence is RPHKRNRRRHLRKGHLK.

This is an uncharacterized protein from Fowl adenovirus A serotype 1 (strain CELO / Phelps) (FAdV-1).